The primary structure comprises 472 residues: MTGTPDVFPPATPGGTPLVALPAGPRKPDQVKGKLYIKTHGCQMNEYDSAKMADVLAASDGLELTDSPDDADVILVNTCSIREKAQEKVFSQLGVWKSLKNKGREVIIGVGGCVASQEGEAIIKRAPFVDLVFGPQTLHRLPELIRARREQKRPQVDISFPEIEKFDRLPEPRADGASAFVSIMEGCSKYCSFCVVPYTRGTEVSRPFEDVVVEVAQLAAQGVREINLLGQNVNAYRGPYGDGEFADLGLLIRTIAEIDGVGRIRFTTSHPLEFSDSLIDAFRDVPQLANFLHLPVQAGSDRVLSAMKRGYTALEFKSKIRKLRAVRPDISISSDFIVGFPGETDADFEKTMKLIEDIGFDHSFSFIYSRRPGTPAADLEDTISDAEKHARLSRLQERINAHAAGISEKMVGTVQTVLVEGPSRKNPNELTGKTENMRSVNFPAPARLIGQFVDVVITEALTNSLRARVVAE.

The interval 1 to 24 (MTGTPDVFPPATPGGTPLVALPAG) is disordered. An MTTase N-terminal domain is found at 33-150 (GKLYIKTHGC…LPELIRARRE (118 aa)). The [4Fe-4S] cluster site is built by Cys-42, Cys-79, Cys-113, Cys-187, Cys-191, and Cys-194. The Radical SAM core domain maps to 173–407 (RADGASAFVS…RINAHAAGIS (235 aa)). In terms of domain architecture, TRAM spans 408 to 471 (EKMVGTVQTV…TNSLRARVVA (64 aa)).

It belongs to the methylthiotransferase family. MiaB subfamily. As to quaternary structure, monomer. It depends on [4Fe-4S] cluster as a cofactor.

Its subcellular location is the cytoplasm. The catalysed reaction is N(6)-dimethylallyladenosine(37) in tRNA + (sulfur carrier)-SH + AH2 + 2 S-adenosyl-L-methionine = 2-methylsulfanyl-N(6)-dimethylallyladenosine(37) in tRNA + (sulfur carrier)-H + 5'-deoxyadenosine + L-methionine + A + S-adenosyl-L-homocysteine + 2 H(+). In terms of biological role, catalyzes the methylthiolation of N6-(dimethylallyl)adenosine (i(6)A), leading to the formation of 2-methylthio-N6-(dimethylallyl)adenosine (ms(2)i(6)A) at position 37 in tRNAs that read codons beginning with uridine. The sequence is that of tRNA-2-methylthio-N(6)-dimethylallyladenosine synthase from Stenotrophomonas maltophilia (strain R551-3).